We begin with the raw amino-acid sequence, 112 residues long: Small ribosomal subunit protein bS6 (112 aa).

This sequence belongs to the bacterial ribosomal protein bS6 family.

Functionally, binds together with bS18 to 16S ribosomal RNA. In Chlamydia caviae (strain ATCC VR-813 / DSM 19441 / 03DC25 / GPIC) (Chlamydophila caviae), this protein is Small ribosomal subunit protein bS6.